Here is a 186-residue protein sequence, read N- to C-terminus: Tumor necrosis factor alpha-induced protein 8-like protein 1 (186 aa).

Positions 37–70 form a coiled coil; that stretch reads EVLDELYRVTKEYTRNRKEAQKIIKNLIKMVVKL.

It belongs to the TNFAIP8 family.

It localises to the cytoplasm. This Danio rerio (Zebrafish) protein is Tumor necrosis factor alpha-induced protein 8-like protein 1 (tnfaip8l1).